Here is a 150-residue protein sequence, read N- to C-terminus: Large ribosomal subunit protein bL9 (150 aa).

It belongs to the bacterial ribosomal protein bL9 family.

Binds to the 23S rRNA. The chain is Large ribosomal subunit protein bL9 from Streptococcus agalactiae serotype Ia (strain ATCC 27591 / A909 / CDC SS700).